Reading from the N-terminus, the 228-residue chain is Transmembrane protein 186 (228 aa).

Topologically, residues 1 to 93 are mitochondrial matrix; the sequence is MDMMMMSTRL…RGLRALSRLK (93 aa). The helical transmembrane segment at 94-112 threads the bilayer; sequence LLQTGITVVLLPTVYYLHL. Over 113–118 the chain is Mitochondrial intermembrane; the sequence is QGQASV. Residues 119 to 141 traverse the membrane as a helical segment; the sequence is LVLNRSIGIALFAGVMLYSISHF. Residues 142-228 lie on the Mitochondrial matrix side of the membrane; the sequence is VRRVVGMMYL…AFGKVFGSLS (87 aa).

Belongs to the TMEM186 family.

The protein resides in the mitochondrion inner membrane. Its function is as follows. May be required for efficient assembly of the mitochondrial complex I. The sequence is that of Transmembrane protein 186 from Danio rerio (Zebrafish).